A 613-amino-acid chain; its full sequence is Autophagy-related protein 22-2 (613 aa).

The tract at residues 1 to 28 is disordered; the sequence is MVLNSTPPASPGAEAQQRPPRYPGEDTA. The helical transmembrane segment at 41–61 threads the bilayer; it reads YGIAAEVFAVCGVGSFLPLTL. Residues 80 to 96 are compositionally biased toward polar residues; sequence GSSSPSTAPGNGTTTAT. Residues 80–99 form a disordered region; that stretch reads GSSSPSTAPGNGTTTATLRR. The N-linked (GlcNAc...) asparagine glycan is linked to asparagine 90. Helical transmembrane passes span 120 to 140, 155 to 177, and 189 to 209; these read SFAM…LISF, LAFG…PVYI, and CLGS…ANDP. The disordered stretch occupies residues 216–257; the sequence is KEEGEELSPVNSSGEFARSEDLDEENVRDSDDHFTTGHGLKT. Asparagine 226 carries an N-linked (GlcNAc...) asparagine glycan. The segment covering 232–250 has biased composition (basic and acidic residues); the sequence is ARSEDLDEENVRDSDDHFT. 4 consecutive transmembrane segments (helical) span residues 278–298, 307–327, 382–402, and 418–438; these read VGLG…MLFA, ISGT…WFSF, VIVF…VSGT, and VGLL…LWPV. Asparagine 448 carries N-linked (GlcNAc...) asparagine glycosylation. The next 4 helical transmembrane spans lie at 453–473, 488–510, 522–544, and 553–573; these read LCIA…IPLF, FPLG…SFFG, YALY…GMLI, and GFFF…MVNA. Positions 592-613 are disordered; that stretch reads GEHASEYGGPSEEAEGLLARDI.

This sequence belongs to the ATG22 family.

Its subcellular location is the vacuole membrane. Vacuolar effluxer which mediate the efflux of amino acids resulting from autophagic degradation. The release of autophagic amino acids allows the maintenance of protein synthesis and viability during nitrogen starvation. This Neosartorya fischeri (strain ATCC 1020 / DSM 3700 / CBS 544.65 / FGSC A1164 / JCM 1740 / NRRL 181 / WB 181) (Aspergillus fischerianus) protein is Autophagy-related protein 22-2 (atg22-2).